A 677-amino-acid chain; its full sequence is Transmembrane and coiled-coil domain-containing protein 3 (677 aa).

A signal peptide spans 1–22; sequence MKVLGRSFFWVLFPVLPWAVQA. Residues 124 to 204 are a coiled coil; it reads DYKDVVNMKE…EEEIEEHAFD (81 aa). N-linked (GlcNAc...) asparagine glycans are attached at residues Asn206 and Asn230. 10 helical membrane-spanning segments follow: residues 286–306, 317–337, 350–370, 416–436, 456–476, 498–518, 554–574, 578–598, 608–628, and 640–660; these read WLCT…GVLL, IVQV…LVGL, ISLQ…LLWG, VLLG…AVMP, ILVL…LCLV, EILI…TELL, FLAI…FVAY, VLVF…ALVL, YIKW…FVLG, and EVYL…PVLW.

This sequence belongs to the monovalent cation:proton antiporter 2 (CPA2) transporter (TC 2.A.37) family. In terms of tissue distribution, expressed in the cornea, lens capsule and choroid-retinal pigment epithelium (at protein level).

The protein resides in the membrane. Its function is as follows. Probable Na(+)/H(+) antiporter. The sequence is that of Transmembrane and coiled-coil domain-containing protein 3 (TMCO3) from Homo sapiens (Human).